The following is a 273-amino-acid chain: Octanoyltransferase (273 aa).

The BPL/LPL catalytic domain occupies 35-254; sequence DRVPDTCLLL…HLRDILENAE (220 aa). Substrate-binding positions include 73 to 80, 184 to 186, and 197 to 199; these read RGGKITWH, AIG, and GFA. The active-site Acyl-thioester intermediate is Cys215.

The protein belongs to the LipB family.

It is found in the cytoplasm. It catalyses the reaction octanoyl-[ACP] + L-lysyl-[protein] = N(6)-octanoyl-L-lysyl-[protein] + holo-[ACP] + H(+). The protein operates within protein modification; protein lipoylation via endogenous pathway; protein N(6)-(lipoyl)lysine from octanoyl-[acyl-carrier-protein]: step 1/2. In terms of biological role, catalyzes the transfer of endogenously produced octanoic acid from octanoyl-acyl-carrier-protein onto the lipoyl domains of lipoate-dependent enzymes. Lipoyl-ACP can also act as a substrate although octanoyl-ACP is likely to be the physiological substrate. This chain is Octanoyltransferase, found in Streptomyces griseus subsp. griseus (strain JCM 4626 / CBS 651.72 / NBRC 13350 / KCC S-0626 / ISP 5235).